Consider the following 876-residue polypeptide: Alanine--tRNA ligase (876 aa).

Zn(2+)-binding residues include H564, H568, C666, and H670.

The protein belongs to the class-II aminoacyl-tRNA synthetase family. Zn(2+) serves as cofactor.

It localises to the cytoplasm. The enzyme catalyses tRNA(Ala) + L-alanine + ATP = L-alanyl-tRNA(Ala) + AMP + diphosphate. Catalyzes the attachment of alanine to tRNA(Ala) in a two-step reaction: alanine is first activated by ATP to form Ala-AMP and then transferred to the acceptor end of tRNA(Ala). Also edits incorrectly charged Ser-tRNA(Ala) and Gly-tRNA(Ala) via its editing domain. The sequence is that of Alanine--tRNA ligase from Porphyromonas gingivalis (strain ATCC BAA-308 / W83).